The following is a 132-amino-acid chain: Small ribosomal subunit protein uS8 (132 aa).

It belongs to the universal ribosomal protein uS8 family. In terms of assembly, part of the 30S ribosomal subunit. Contacts proteins S5 and S12.

Functionally, one of the primary rRNA binding proteins, it binds directly to 16S rRNA central domain where it helps coordinate assembly of the platform of the 30S subunit. The sequence is that of Small ribosomal subunit protein uS8 from Corynebacterium jeikeium (strain K411).